The following is a 430-amino-acid chain: C4-dicarboxylate transport protein (430 aa).

9 consecutive transmembrane segments (helical) span residues 8 to 28, 44 to 64, 76 to 96, 144 to 164, 184 to 204, 222 to 242, 289 to 309, 326 to 346, and 352 to 372; these read SLYFQVLAAITIGILLGHFYP, LIKMIIAPVIFCTVVTGIAGM, AALLYFEVVSTIALIIGLVVV, AFASGNILQVLLFAVMFGFAL, VIFGVINMIMKLAPLGAFGAM, LILCFYLTCILFVFLVLGSIA, VVGLVIPTGYSFNLDGTSIYL, IWHQITLLVVLLLSSKGAAGV, and IVLAATLSAVGHLPVAGLALI.

Belongs to the dicarboxylate/amino acid:cation symporter (DAACS) (TC 2.A.23) family.

Its subcellular location is the cell inner membrane. Responsible for the transport of dicarboxylates such as succinate, fumarate, and malate from the periplasm across the membrane. This Pectobacterium atrosepticum (strain SCRI 1043 / ATCC BAA-672) (Erwinia carotovora subsp. atroseptica) protein is C4-dicarboxylate transport protein.